Reading from the N-terminus, the 590-residue chain is V-type ATP synthase alpha chain (590 aa).

Position 232–239 (Gly-232–Thr-239) interacts with ATP.

It belongs to the ATPase alpha/beta chains family.

It catalyses the reaction ATP + H2O + 4 H(+)(in) = ADP + phosphate + 5 H(+)(out). Its function is as follows. Produces ATP from ADP in the presence of a proton gradient across the membrane. The V-type alpha chain is a catalytic subunit. In Thermoanaerobacter pseudethanolicus (strain ATCC 33223 / 39E) (Clostridium thermohydrosulfuricum), this protein is V-type ATP synthase alpha chain.